We begin with the raw amino-acid sequence, 158 residues long: Protein Smg homolog (158 aa).

It belongs to the Smg family.

The polypeptide is Protein Smg homolog (Shewanella sp. (strain MR-4)).